The sequence spans 552 residues: uncharacterized protein (552 aa).

The protein belongs to the transposase 25 family.

This is an uncharacterized protein from Sinorhizobium fredii (strain NBRC 101917 / NGR234).